Reading from the N-terminus, the 601-residue chain is MDSRRRSPTVTAKAAAGELPLAPHEGQNQQPSIPRSSDVLPLPLYLANGVFFTLFFSVMYFLLTRWREKIRNATPLHVVTLSELAALASLIASVIYLVSFFGLDFVQSLIYKPNNEGWEIEEEILMVEDSRNGTNCTTLGCAVPPPSVPKIAPVVPQQPSKMVIIEKPAPLITPQNSEEDEDIIKAVVAGKIPSYSLESKLGDCKRAAGIRREALQRITGKSLEGLPLEGFDYASILGQCCEMPVGYVQLPVGIAGPLLLDGREYMLPMATTEGCLVASTNRGCKAILASGGANSVLLRDGMTRAPVVRFGTAKRAAELKFYMEDTQNFETISVVFNKSSRFAKLQSVQCAIAGKNLYIRFSCSTGDAMGMNMVSKGVQNVLEFLQTDYPDMDVLGISGNFCADKKPAAVNWIEGRGKSVVCEAIIKEEIVKTVLKTEVAALIELNMVKNLAGSAIAGALGGFNAHASNIVSAIFIATGQDPAQNVESSQCITMMEAVNDGKDLHISVTMPSIEVGTVGGGTQLASQSACLNLLGVKGASKDSPGANSRLLATIVAGSVLAGELSLMSAISAGQLVRSHMKYNRSSKDITNIASSQLESDS.

Positions 1–34 (MDSRRRSPTVTAKAAAGELPLAPHEGQNQQPSIP) are disordered. 2 helical membrane passes run 36–58 (SSDVLPLPLYLANGVFFTLFFSV) and 86–106 (ALASLIASVIYLVSFFGLDFV). Residues 107-179 (QSLIYKPNNE…PLITPQNSEE (73 aa)) form a linker region. The segment at 180–601 (DEDIIKAVVA…IASSQLESDS (422 aa)) is catalytic. Glutamate 273 serves as the catalytic Charge relay system. Asparagine 337 carries N-linked (GlcNAc...) asparagine glycosylation. Catalysis depends on charge relay system residues lysine 405 and aspartate 481. The active-site Proton donor is the histidine 579. Asparagine 583 carries N-linked (GlcNAc...) asparagine glycosylation.

The protein belongs to the HMG-CoA reductase family.

It is found in the endoplasmic reticulum membrane. The enzyme catalyses (R)-mevalonate + 2 NADP(+) + CoA = (3S)-3-hydroxy-3-methylglutaryl-CoA + 2 NADPH + 2 H(+). The protein operates within metabolic intermediate biosynthesis; (R)-mevalonate biosynthesis; (R)-mevalonate from acetyl-CoA: step 3/3. Functionally, catalyzes the synthesis of mevalonate. The specific precursor of all isoprenoid compounds present in plants. This chain is 3-hydroxy-3-methylglutaryl-coenzyme A reductase (HMGR), found in Catharanthus roseus (Madagascar periwinkle).